Reading from the N-terminus, the 190-residue chain is Isopentenyl-diphosphate Delta-isomerase (190 aa).

Mn(2+) is bound by residues His27 and His34. Residues 32–166 (ALHLAFSCHV…PWAFSPWLTL (135 aa)) form the Nudix hydrolase domain. The active site involves Cys69. His71 contributes to the Mn(2+) binding site. Glu89 lines the Mg(2+) pocket. Mn(2+)-binding residues include Glu116 and Glu118. The active site involves Glu118.

This sequence belongs to the IPP isomerase type 1 family. Mg(2+) serves as cofactor. Requires Mn(2+) as cofactor.

Its subcellular location is the cytoplasm. The catalysed reaction is isopentenyl diphosphate = dimethylallyl diphosphate. It participates in isoprenoid biosynthesis; dimethylallyl diphosphate biosynthesis; dimethylallyl diphosphate from isopentenyl diphosphate: step 1/1. Functionally, catalyzes the 1,3-allylic rearrangement of the homoallylic substrate isopentenyl (IPP) to its highly electrophilic allylic isomer, dimethylallyl diphosphate (DMAPP). In Clavibacter sepedonicus (Clavibacter michiganensis subsp. sepedonicus), this protein is Isopentenyl-diphosphate Delta-isomerase.